Here is a 144-residue protein sequence, read N- to C-terminus: Bacilliredoxin BH1716 (144 aa).

This sequence belongs to the bacilliredoxin family.

The protein is Bacilliredoxin BH1716 of Halalkalibacterium halodurans (strain ATCC BAA-125 / DSM 18197 / FERM 7344 / JCM 9153 / C-125) (Bacillus halodurans).